A 348-amino-acid chain; its full sequence is L-threonine 3-dehydrogenase (348 aa).

Residue C38 participates in Zn(2+) binding. Residues T40 and H43 each act as charge relay system in the active site. H63, E64, C93, C96, C99, and C107 together coordinate Zn(2+). Residues I175, D195, R200, 263–265 (LGI), and 287–288 (IY) each bind NAD(+).

The protein belongs to the zinc-containing alcohol dehydrogenase family. In terms of assembly, homotetramer. Zn(2+) is required as a cofactor.

It is found in the cytoplasm. It carries out the reaction L-threonine + NAD(+) = (2S)-2-amino-3-oxobutanoate + NADH + H(+). The protein operates within amino-acid degradation; L-threonine degradation via oxydo-reductase pathway; glycine from L-threonine: step 1/2. Catalyzes the NAD(+)-dependent oxidation of L-threonine to 2-amino-3-ketobutyrate. The sequence is that of L-threonine 3-dehydrogenase from Deinococcus radiodurans (strain ATCC 13939 / DSM 20539 / JCM 16871 / CCUG 27074 / LMG 4051 / NBRC 15346 / NCIMB 9279 / VKM B-1422 / R1).